Consider the following 295-residue polypeptide: Bifunctional protein FolD (295 aa).

NADP(+)-binding positions include G169–G171, T196, and V237.

The protein belongs to the tetrahydrofolate dehydrogenase/cyclohydrolase family. In terms of assembly, homodimer.

It carries out the reaction (6R)-5,10-methylene-5,6,7,8-tetrahydrofolate + NADP(+) = (6R)-5,10-methenyltetrahydrofolate + NADPH. The enzyme catalyses (6R)-5,10-methenyltetrahydrofolate + H2O = (6R)-10-formyltetrahydrofolate + H(+). It participates in one-carbon metabolism; tetrahydrofolate interconversion. Its function is as follows. Catalyzes the oxidation of 5,10-methylenetetrahydrofolate to 5,10-methenyltetrahydrofolate and then the hydrolysis of 5,10-methenyltetrahydrofolate to 10-formyltetrahydrofolate. This Kineococcus radiotolerans (strain ATCC BAA-149 / DSM 14245 / SRS30216) protein is Bifunctional protein FolD.